The sequence spans 125 residues: Small ribosomal subunit protein uS12 (125 aa).

The segment at 1-31 (MPTINQLVRQGREVETTKSKSPAMQNSPQRR) is disordered. Polar residues predominate over residues 19 to 29 (SKSPAMQNSPQ). Asp89 carries the post-translational modification 3-methylthioaspartic acid.

The protein belongs to the universal ribosomal protein uS12 family. In terms of assembly, part of the 30S ribosomal subunit. Contacts proteins S8 and S17. May interact with IF1 in the 30S initiation complex.

Its function is as follows. With S4 and S5 plays an important role in translational accuracy. In terms of biological role, interacts with and stabilizes bases of the 16S rRNA that are involved in tRNA selection in the A site and with the mRNA backbone. Located at the interface of the 30S and 50S subunits, it traverses the body of the 30S subunit contacting proteins on the other side and probably holding the rRNA structure together. The combined cluster of proteins S8, S12 and S17 appears to hold together the shoulder and platform of the 30S subunit. The sequence is that of Small ribosomal subunit protein uS12 from Paracidovorax citrulli (strain AAC00-1) (Acidovorax citrulli).